The sequence spans 210 residues: Glutathione S-transferase P (210 aa).

A GST N-terminal domain is found at P2 to G81. At Y4 the chain carries Phosphotyrosine; by EGFR. Glutathione is bound by residues Y8, R14, W39, K45, and Q52–L53. T62 is modified (phosphothreonine). Q65–S66 contributes to the glutathione binding site. The 122-residue stretch at D83–I204 folds into the GST C-terminal domain. Residues K103 and K116 each carry the N6-succinyllysine modification. K128 bears the N6-acetyllysine mark.

It belongs to the GST superfamily. Pi family. Homodimer. Interacts with CDK5.

It is found in the cytoplasm. It localises to the mitochondrion. The protein localises to the nucleus. The enzyme catalyses RX + glutathione = an S-substituted glutathione + a halide anion + H(+). It catalyses the reaction prostaglandin J2 + glutathione = prostaglandin J2-S-(R)-glutathione. The catalysed reaction is prostaglandin J2 + glutathione = prostaglandin J2-S-(S)-glutathione. It carries out the reaction prostaglandin A2 + glutathione = prostaglandin A2-S-(S)-glutathione. The enzyme catalyses 11(S)-hydroxy-14(S),15(S)-epoxy-(5Z,8Z,12E)-eicosatrienoate + glutathione = (11S,15S)-dihydroxy-14(R)-S-glutathionyl-(5Z,8Z,12E)-eicosatrienoate. Functionally, conjugation of reduced glutathione to a wide number of exogenous and endogenous hydrophobic electrophiles. Involved in the formation of glutathione conjugates of both prostaglandin A2 (PGA2) and prostaglandin J2 (PGJ2). Participates in the formation of novel hepoxilin regioisomers. Negatively regulates CDK5 activity via p25/p35 translocation to prevent neurodegeneration. In Bos taurus (Bovine), this protein is Glutathione S-transferase P (GSTP1).